We begin with the raw amino-acid sequence, 270 residues long: Small ribosomal subunit protein bS1m (270 aa).

The interval 218–250 is disordered; the sequence is TKQGFKHLGPKPLAYTEKKRETTKQSTKNNVFQ.

It belongs to the bacterial ribosomal protein bS1 family.

It is found in the mitochondrion. This Marchantia polymorpha (Common liverwort) protein is Small ribosomal subunit protein bS1m (RPS1).